The following is a 681-amino-acid chain: Chaperone protein HtpG (681 aa).

The segment at 1 to 326 (MQKGNIGVTT…SPDIPLNVSR (326 aa)) is a; substrate-binding. Residues 327 to 545 (SYLQSDSNVK…YMRRMKEMAN (219 aa)) form a b region. Residues 546 to 681 (IQAGMSFYGE…NFVKRSIELI (136 aa)) are c. Residues 589-620 (IQTEMNSVSKRRNELKDSQKDKKEEDIPTAEK) form a disordered region. Basic and acidic residues predominate over residues 599–620 (RRNELKDSQKDKKEEDIPTAEK).

Belongs to the heat shock protein 90 family. As to quaternary structure, homodimer.

The protein localises to the cytoplasm. In terms of biological role, molecular chaperone. Has ATPase activity. In Bacteroides thetaiotaomicron (strain ATCC 29148 / DSM 2079 / JCM 5827 / CCUG 10774 / NCTC 10582 / VPI-5482 / E50), this protein is Chaperone protein HtpG.